The sequence spans 356 residues: Alanine racemase, catabolic (356 aa).

Lys35 (proton acceptor; specific for D-alanine) is an active-site residue. Lys35 is modified (N6-(pyridoxal phosphate)lysine). Arg130 contributes to the substrate binding site. The active-site Proton acceptor; specific for L-alanine is the Tyr253. Residue Met301 participates in substrate binding.

Belongs to the alanine racemase family. As to quaternary structure, monomer. It depends on pyridoxal 5'-phosphate as a cofactor.

The enzyme catalyses L-alanine = D-alanine. Inactivated by D- and L-beta-fluoroalanine, D- and L-beta-chloroalanine, and O-acetyl-D-serine. Functionally, isomerizes L-alanine to D-alanine which is then oxidized to pyruvate by DadA. The polypeptide is Alanine racemase, catabolic (dadX) (Salmonella typhimurium (strain LT2 / SGSC1412 / ATCC 700720)).